A 119-amino-acid chain; its full sequence is Large ribosomal subunit protein bL20 (119 aa).

Belongs to the bacterial ribosomal protein bL20 family.

Functionally, binds directly to 23S ribosomal RNA and is necessary for the in vitro assembly process of the 50S ribosomal subunit. It is not involved in the protein synthesizing functions of that subunit. The chain is Large ribosomal subunit protein bL20 from Saccharophagus degradans (strain 2-40 / ATCC 43961 / DSM 17024).